The chain runs to 103 residues: Pyrimidine/purine nucleoside phosphorylase (103 aa).

It belongs to the nucleoside phosphorylase PpnP family.

The catalysed reaction is a purine D-ribonucleoside + phosphate = a purine nucleobase + alpha-D-ribose 1-phosphate. The enzyme catalyses adenosine + phosphate = alpha-D-ribose 1-phosphate + adenine. It catalyses the reaction cytidine + phosphate = cytosine + alpha-D-ribose 1-phosphate. It carries out the reaction guanosine + phosphate = alpha-D-ribose 1-phosphate + guanine. The catalysed reaction is inosine + phosphate = alpha-D-ribose 1-phosphate + hypoxanthine. The enzyme catalyses thymidine + phosphate = 2-deoxy-alpha-D-ribose 1-phosphate + thymine. It catalyses the reaction uridine + phosphate = alpha-D-ribose 1-phosphate + uracil. It carries out the reaction xanthosine + phosphate = alpha-D-ribose 1-phosphate + xanthine. Catalyzes the phosphorolysis of diverse nucleosides, yielding D-ribose 1-phosphate and the respective free bases. Can use uridine, adenosine, guanosine, cytidine, thymidine, inosine and xanthosine as substrates. Also catalyzes the reverse reactions. The protein is Pyrimidine/purine nucleoside phosphorylase of Dechloromonas aromatica (strain RCB).